The primary structure comprises 182 residues: Probable RNA 2'-phosphotransferase (182 aa).

Belongs to the KptA/TPT1 family.

Its function is as follows. Removes the 2'-phosphate from RNA via an intermediate in which the phosphate is ADP-ribosylated by NAD followed by a presumed transesterification to release the RNA and generate ADP-ribose 1''-2''-cyclic phosphate (APPR&gt;P). May function as an ADP-ribosylase. The chain is Probable RNA 2'-phosphotransferase from Acetivibrio thermocellus (strain ATCC 27405 / DSM 1237 / JCM 9322 / NBRC 103400 / NCIMB 10682 / NRRL B-4536 / VPI 7372) (Clostridium thermocellum).